The sequence spans 528 residues: Peptide chain release factor 3 (528 aa).

The tr-type G domain occupies 10–280 (AKRRTFGIIS…IDMAPAPGPR (271 aa)). GTP is bound by residues 19 to 26 (SHPDAGKT), 87 to 91 (DTPGH), and 141 to 144 (NKLD).

This sequence belongs to the TRAFAC class translation factor GTPase superfamily. Classic translation factor GTPase family. PrfC subfamily.

Its subcellular location is the cytoplasm. Functionally, increases the formation of ribosomal termination complexes and stimulates activities of RF-1 and RF-2. It binds guanine nucleotides and has strong preference for UGA stop codons. It may interact directly with the ribosome. The stimulation of RF-1 and RF-2 is significantly reduced by GTP and GDP, but not by GMP. The protein is Peptide chain release factor 3 of Desulfotalea psychrophila (strain LSv54 / DSM 12343).